The sequence spans 1865 residues: Endoribonuclease Dicer (1865 aa).

The Helicase ATP-binding domain maps to 41 to 213 (LLEAALEHNT…DLEEKIQNLE (173 aa)). 54-61 (LNTGSGKT) provides a ligand contact to ATP. The DECH box motif lies at 161-164 (DECH). Residues 397–417 (SWSDSEDDDEDEEAEAKEKTE) form a disordered region. Acidic residues predominate over residues 400-411 (DSEDDDEDEEAE). The Helicase C-terminal domain occupies 419-588 (NFPSPFTNIL…SAECNDFELE (170 aa)). Residues 616–708 (AIGHVNRYCA…MPVGKETVKY (93 aa)) enclose the Dicer dsRNA-binding fold domain. Residues 713-732 (DLHDEEETSVPGRPGSTKRR) form a disordered region. In terms of domain architecture, PAZ spans 881–1028 (KFMEDIEKSE…LVPELCAIHP (148 aa)). 2 stretches are compositionally biased toward polar residues: residues 1111 to 1128 (GTSS…SMEV) and 1192 to 1201 (STQTTTSVSV). 2 disordered regions span residues 1111 to 1142 (GTSS…PDEK) and 1190 to 1259 (DLST…DCRS). Over residues 1240–1252 (SETATSTPAPSET) the composition is skewed to low complexity. One can recognise an RNase III 1 domain in the interval 1262–1385 (AGPAWDSPKT…TDKWDSDENK (124 aa)). The Mg(2+) site is built by glutamate 1298, aspartate 1377, and aspartate 1380. Residues 1373 to 1417 (KSSTDKWDSDENKDLANGKASDDEDEDDDDEPEEAEVEPSKEDVN) are disordered. Residues 1374–1388 (SSTDKWDSDENKDLA) are compositionally biased toward basic and acidic residues. Acidic residues predominate over residues 1394-1409 (DDEDEDDDDEPEEAEV). The 159-residue stretch at 1609-1767 (FLNFESKINY…LAGAIYMDSG (159 aa)) folds into the RNase III 2 domain. Glutamate 1648, aspartate 1753, and glutamate 1756 together coordinate Mg(2+). The DRBM domain maps to 1792–1857 (VPRSPVRELL…ARRALRSLKA (66 aa)).

It belongs to the helicase family. Dicer subfamily. In terms of assembly, component of the RISC loading complex (RLC), or micro-RNA (miRNA) loading complex (miRLC), which is composed of dicer1, ago2 and tarbp2; dicer1 and tarbp2 are required to process precursor miRNAs (pre-miRNAs) to mature miRNAs and then load them onto ago2. Note that the trimeric RLC/miRLC is also referred to as RISC. Requires Mg(2+) as cofactor. Mn(2+) is required as a cofactor.

The protein localises to the cytoplasm. It catalyses the reaction Endonucleolytic cleavage to 5'-phosphomonoester.. Functionally, double-stranded RNA (dsRNA) endoribonuclease playing a central role in short dsRNA-mediated post-transcriptional gene silencing. Cleaves naturally occurring long dsRNAs and short hairpin pre-microRNAs (miRNA) into fragments of twenty-one to twenty-three nucleotides with 3' overhang of two nucleotides, producing respectively short interfering RNAs (siRNA) and mature microRNAs. SiRNAs and miRNAs serve as guide to direct the RNA-induced silencing complex (RISC) to complementary RNAs to degrade them or prevent their translation. Gene silencing mediated by siRNAs, also called RNA interference, controls the elimination of transcripts from mobile and repetitive DNA elements of the genome but also the degradation of exogenous RNA of viral origin for instance. The miRNA pathway on the other side is a mean to specifically regulate the expression of target genes. The sequence is that of Endoribonuclease Dicer (dicer1) from Danio rerio (Zebrafish).